A 215-amino-acid chain; its full sequence is Cytochrome b6 (215 aa).

Residues 32–52 (IFYCLGGITLTCFLVQVATGF) form a helical membrane-spanning segment. Residue C35 participates in heme c binding. Heme b-binding residues include H86 and H100. The next 3 membrane-spanning stretches (helical) occupy residues 90–110 (ASMM…TGGF), 116–136 (LTWV…VTGY), and 186–206 (LHTF…FPMI). H187 and H202 together coordinate heme b.

This sequence belongs to the cytochrome b family. PetB subfamily. The 4 large subunits of the cytochrome b6-f complex are cytochrome b6, subunit IV (17 kDa polypeptide, PetD), cytochrome f and the Rieske protein, while the 4 small subunits are PetG, PetL, PetM and PetN. The complex functions as a dimer. It depends on heme b as a cofactor. Heme c serves as cofactor.

It localises to the plastid. The protein resides in the chloroplast thylakoid membrane. Component of the cytochrome b6-f complex, which mediates electron transfer between photosystem II (PSII) and photosystem I (PSI), cyclic electron flow around PSI, and state transitions. The chain is Cytochrome b6 from Lactuca sativa (Garden lettuce).